The chain runs to 216 residues: Small ribosomal subunit protein uS5 (216 aa).

Residues 1 to 55 (MDKKLENQKDLLNQDPKVELNSQSVAKNPLNSREVKPIQRRRPLRKNARDKNSKP) are disordered. Over residues 20–31 (LNSQSVAKNPLN) the composition is skewed to polar residues. The region spanning 57–120 (FEERVIAIHR…KDAQNRLVSV (64 aa)) is the S5 DRBM domain.

The protein belongs to the universal ribosomal protein uS5 family. As to quaternary structure, part of the 30S ribosomal subunit. Contacts proteins S4 and S8.

Functionally, with S4 and S12 plays an important role in translational accuracy. Located at the back of the 30S subunit body where it stabilizes the conformation of the head with respect to the body. The chain is Small ribosomal subunit protein uS5 from Mesomycoplasma hyopneumoniae (strain 7448) (Mycoplasma hyopneumoniae).